We begin with the raw amino-acid sequence, 105 residues long: Large ribosomal subunit protein bL21c (105 aa).

It belongs to the bacterial ribosomal protein bL21 family. As to quaternary structure, part of the 50S ribosomal subunit.

The protein resides in the plastid. Its subcellular location is the chloroplast. Its function is as follows. This protein binds to 23S rRNA. This is Large ribosomal subunit protein bL21c from Trieres chinensis (Marine centric diatom).